Here is a 346-residue protein sequence, read N- to C-terminus: Phosphoribosylformylglycinamidine cyclo-ligase (346 aa).

This sequence belongs to the AIR synthase family.

It localises to the cytoplasm. The enzyme catalyses 2-formamido-N(1)-(5-O-phospho-beta-D-ribosyl)acetamidine + ATP = 5-amino-1-(5-phospho-beta-D-ribosyl)imidazole + ADP + phosphate + H(+). The protein operates within purine metabolism; IMP biosynthesis via de novo pathway; 5-amino-1-(5-phospho-D-ribosyl)imidazole from N(2)-formyl-N(1)-(5-phospho-D-ribosyl)glycinamide: step 2/2. This is Phosphoribosylformylglycinamidine cyclo-ligase from Brevibacillus brevis (strain 47 / JCM 6285 / NBRC 100599).